Here is a 393-residue protein sequence, read N- to C-terminus: Prokineticin receptor 1 (393 aa).

Over 1-62 the chain is Extracellular; it reads METTVGALGE…TNSRTFFAAK (62 aa). N-linked (GlcNAc...) asparagine glycosylation occurs at asparagine 11. Residues 63–83 form a helical membrane-spanning segment; it reads IVIGMALVGIMLVCGIGNFIF. The Cytoplasmic portion of the chain corresponds to 84 to 98; it reads ITALARYKKLRNLTN. A helical transmembrane segment spans residues 99–119; sequence LLIANLAISDFLVAIVCCPFE. The Extracellular portion of the chain corresponds to 120–146; sequence MDYYVVRQLSWEHGHVLCASVNYLRTV. Residues cysteine 137 and cysteine 217 are joined by a disulfide bond. A helical transmembrane segment spans residues 147–167; the sequence is SLYVSTNALLAIAIDRYLAIV. At 168–179 the chain is on the cytoplasmic side; it reads HPLRPRMKCQTA. A helical membrane pass occupies residues 180–200; it reads AGLIFLVWSVSILIAIPAAYF. Topologically, residues 201–232 are extracellular; sequence TTETVLVIVERQEKIFCGQIWPVDQQFYYRSY. A helical transmembrane segment spans residues 233–253; sequence FLLVFGLEFVGPVVAMTLCYA. At 254–282 the chain is on the cytoplasmic side; sequence RVSRELWFKAVPGFQTEQIRRRLRCRRRT. The chain crosses the membrane as a helical span at residues 283 to 303; it reads VLGLVCVLSAYVLCWAPFYGF. Topologically, residues 304 to 322 are extracellular; it reads TIVRDFFPSVFVKEKHYLT. Residues 323–343 form a helical membrane-spanning segment; it reads AFYVVECIAMSNSMINTLCFV. At 344–393 the chain is on the cytoplasmic side; it reads TVRNNTSKYLKRILRLQWRASPSGSKASADLDLRTTGIPATEEVDCIRLK.

The protein belongs to the G-protein coupled receptor 1 family. In terms of tissue distribution, expressed at high levels in the heart, skeletal muscle and pancreas. Expressed at lower levels in the brain, lung, liver and kidney.

The protein localises to the cell membrane. Its function is as follows. Receptor for prokineticin 1. Exclusively coupled to the G(q) subclass of heteromeric G proteins. Activation leads to mobilization of calcium, stimulation of phosphoinositide turnover and activation of p44/p42 mitogen-activated protein kinase. May play a role during early pregnancy. This chain is Prokineticin receptor 1 (Prokr1), found in Mus musculus (Mouse).